The sequence spans 156 residues: 6,7-dimethyl-8-ribityllumazine synthase (156 aa).

Residues Phe23, 57–59, and 81–83 contribute to the 5-amino-6-(D-ribitylamino)uracil site; these read AFE and AVI. 86–87 provides a ligand contact to (2S)-2-hydroxy-3-oxobutyl phosphate; the sequence is ST. Catalysis depends on His89, which acts as the Proton donor. Phe114 provides a ligand contact to 5-amino-6-(D-ribitylamino)uracil. Arg128 is a binding site for (2S)-2-hydroxy-3-oxobutyl phosphate.

Belongs to the DMRL synthase family.

It carries out the reaction (2S)-2-hydroxy-3-oxobutyl phosphate + 5-amino-6-(D-ribitylamino)uracil = 6,7-dimethyl-8-(1-D-ribityl)lumazine + phosphate + 2 H2O + H(+). Its pathway is cofactor biosynthesis; riboflavin biosynthesis; riboflavin from 2-hydroxy-3-oxobutyl phosphate and 5-amino-6-(D-ribitylamino)uracil: step 1/2. Its function is as follows. Catalyzes the formation of 6,7-dimethyl-8-ribityllumazine by condensation of 5-amino-6-(D-ribitylamino)uracil with 3,4-dihydroxy-2-butanone 4-phosphate. This is the penultimate step in the biosynthesis of riboflavin. The protein is 6,7-dimethyl-8-ribityllumazine synthase of Sulfurospirillum multivorans (Dehalospirillum multivorans).